The primary structure comprises 504 residues: MEKFQGYLEFDGARQQSFLYPLFFREYIYVLAYDHGLNRLNRNRSIFLENTDYDKKYSSLIVKRLILRMYEQNRLIIPTKDLNQNSFLGHTSLFYYQMISVLFAVIVEIPFSLRLGSSFQGKQFKKSYNLQSIHSIFPFLEDKLAHFNYVLDVLIPYPIHLEILVQILRYWVKDASSLHFFRFCLYEYCNCKNFYIKKKSILNPRFFLFLYNSHVCEYESIFFFLRKRSSHLRSPSYEVLFERIFFYGKIQDFFKVFVNNFPAILGLLKDPFIHYVRYHGRCILATKDTPLLMNKWKYFFVNLWQCYFSVWFQSQKVNINQLSKDNLEFLGYLSSLRLNPLVVRSQMLENSFLIDNVRIKLDSKIPISSIIGSLAKDKFCNVLGHPISKATWTDSSDSDILNRFVRICRNISHYYSGSSKKKNLYRIKYILRLCCVKTLARKHKSTVRAFLKRLGSVLLEEFLTGEDQVLSLIFPRSYYASKRLYRVRIWYLDILYLNDLVNHE.

It belongs to the intron maturase 2 family. MatK subfamily.

Its subcellular location is the plastid. The protein localises to the chloroplast. Usually encoded in the trnK tRNA gene intron. Probably assists in splicing its own and other chloroplast group II introns. The protein is Maturase K of Arabidopsis lyrata (Lyre-leaved rock-cress).